The chain runs to 356 residues: S-adenosylmethionine:tRNA ribosyltransferase-isomerase (356 aa).

This sequence belongs to the QueA family. Monomer.

Its subcellular location is the cytoplasm. The catalysed reaction is 7-aminomethyl-7-carbaguanosine(34) in tRNA + S-adenosyl-L-methionine = epoxyqueuosine(34) in tRNA + adenine + L-methionine + 2 H(+). It participates in tRNA modification; tRNA-queuosine biosynthesis. Functionally, transfers and isomerizes the ribose moiety from AdoMet to the 7-aminomethyl group of 7-deazaguanine (preQ1-tRNA) to give epoxyqueuosine (oQ-tRNA). The chain is S-adenosylmethionine:tRNA ribosyltransferase-isomerase from Escherichia coli O6:K15:H31 (strain 536 / UPEC).